Reading from the N-terminus, the 457-residue chain is Bifunctional protein GlmU (457 aa).

The tract at residues 1–230 is pyrophosphorylase; sequence MSKRYAVVLA…FEESLGVNDR (230 aa). UDP-N-acetyl-alpha-D-glucosamine contacts are provided by residues 9–12, lysine 23, glutamine 73, and 78–79; these read LAAG and GT. Residue aspartate 103 participates in Mg(2+) binding. UDP-N-acetyl-alpha-D-glucosamine-binding residues include glycine 140, glutamate 155, asparagine 170, and asparagine 228. Residue asparagine 228 participates in Mg(2+) binding. The linker stretch occupies residues 231–251; the sequence is IALAEASKLMQRRINENHMRN. An N-acetyltransferase region spans residues 252–457; sequence GVTLVNPEST…GYAKHLNHSK (206 aa). Residues arginine 333 and lysine 351 each coordinate UDP-N-acetyl-alpha-D-glucosamine. Histidine 363 (proton acceptor) is an active-site residue. 2 residues coordinate UDP-N-acetyl-alpha-D-glucosamine: tyrosine 366 and asparagine 377. Acetyl-CoA contacts are provided by residues 386–387, alanine 423, and arginine 440; that span reads NY.

The protein in the N-terminal section; belongs to the N-acetylglucosamine-1-phosphate uridyltransferase family. This sequence in the C-terminal section; belongs to the transferase hexapeptide repeat family. Homotrimer. Mg(2+) is required as a cofactor.

The protein resides in the cytoplasm. It catalyses the reaction alpha-D-glucosamine 1-phosphate + acetyl-CoA = N-acetyl-alpha-D-glucosamine 1-phosphate + CoA + H(+). The enzyme catalyses N-acetyl-alpha-D-glucosamine 1-phosphate + UTP + H(+) = UDP-N-acetyl-alpha-D-glucosamine + diphosphate. It participates in nucleotide-sugar biosynthesis; UDP-N-acetyl-alpha-D-glucosamine biosynthesis; N-acetyl-alpha-D-glucosamine 1-phosphate from alpha-D-glucosamine 6-phosphate (route II): step 2/2. The protein operates within nucleotide-sugar biosynthesis; UDP-N-acetyl-alpha-D-glucosamine biosynthesis; UDP-N-acetyl-alpha-D-glucosamine from N-acetyl-alpha-D-glucosamine 1-phosphate: step 1/1. Its pathway is bacterial outer membrane biogenesis; LPS lipid A biosynthesis. In terms of biological role, catalyzes the last two sequential reactions in the de novo biosynthetic pathway for UDP-N-acetylglucosamine (UDP-GlcNAc). The C-terminal domain catalyzes the transfer of acetyl group from acetyl coenzyme A to glucosamine-1-phosphate (GlcN-1-P) to produce N-acetylglucosamine-1-phosphate (GlcNAc-1-P), which is converted into UDP-GlcNAc by the transfer of uridine 5-monophosphate (from uridine 5-triphosphate), a reaction catalyzed by the N-terminal domain. The polypeptide is Bifunctional protein GlmU (Listeria monocytogenes serovar 1/2a (strain ATCC BAA-679 / EGD-e)).